The following is a 510-amino-acid chain: MESMLVAGAGAAAVAAVGGLVAAAALADKLVAAPPPRKNRANPPPAVPGLPIIGNLHQLKEKKPHQTFAKWSETYGPIYTIKTGASPVVVLNSTEVAKEAMIDKFSSISTRKLPKAMSVLTRKSMVAISDYGDYQKMAKRNIMIGMLGFNAQKQFRGTRERMISNVLSTLHKLVSLDPHSPLNFRDVYINELFSLSLIQSLGEDVSSVYVEEFGREISKDEIFDVLVHEMMMCAVEADWRDYFPYLSWLPNKSFDTIVSTTEFRRDAIMNALIKKQKERIARGEARASYIDFLLEAERSAQLTDDQLMLLLSESILAAADTVLVTTEWTMYEIAKNPDKQELLYQEIREACGGEAVTEDDLPRLPYLNAVFHETLRLHSPVPVLPPRFVHDDTTLAGYDIAAGTQMMINVYACHMDEKVWESPGEWSPERFLGEGFEVADRYKTMAFGAGRRTCAGSLQAMNIACVAVARLVQELEWRLREGDGDKEDTMQFTALKLDPLHVHLKPRGRM.

Residues 4–24 (MLVAGAGAAAVAAVGGLVAAA) traverse the membrane as a helical segment. C454 contacts heme.

This sequence belongs to the cytochrome P450 family. Interacts with the rice dwarf virus (RDV) P2 protein. It depends on heme as a cofactor. As to expression, expressed in leaf blades and sheaths, stems and panicles.

It is found in the membrane. The enzyme catalyses ent-sandaracopimara-8(14),15-diene + reduced [NADPH--hemoprotein reductase] + O2 = ent-sandaracopimaradien-3beta-ol + oxidized [NADPH--hemoprotein reductase] + H2O + H(+). It catalyses the reaction 9beta-pimara-7,15-diene + reduced [NADPH--hemoprotein reductase] + O2 = 9beta-pimara-7,15-diene-3beta-ol + oxidized [NADPH--hemoprotein reductase] + H2O + H(+). Its function is as follows. Catalyzes the hydroxylation of ent-sandaracopimaradiene at the C3alpha position to produce ent-3beta-hydroxy-sandaracopimaradiene, an intermediates for the biosynthesis of oryzalexin D and oryzalexin E phytoalexins. Catalyzes the hydroxylation of ent-cassadiene at the C3alpha position to produce 3alpha-hydroxy-ent-cassadiene, which may be an intermediate for the biosynthesis of phytocassane phytoalexins. Catalyzes the hydroxylation of syn-pimaradiene (9-beta-pimara-7,15-diene) at the C3beta position to produce 3-beta-syn-pimaradiene. Can hydroxylate ent-kaurene in vitro, but the product is not ent-kauren-19-ol as expected for ent-kaurene oxidase activity. This chain is Ent-sandaracopimaradiene 3-hydroxylase, found in Oryza sativa subsp. japonica (Rice).